Consider the following 315-residue polypeptide: Acetyl-coenzyme A carboxylase carboxyl transferase subunit alpha (315 aa).

Residues 32-293 (NISDEIARLQ…RADLVQQLDM (262 aa)) form the CoA carboxyltransferase C-terminal domain.

Belongs to the AccA family. Acetyl-CoA carboxylase is a heterohexamer composed of biotin carboxyl carrier protein (AccB), biotin carboxylase (AccC) and two subunits each of ACCase subunit alpha (AccA) and ACCase subunit beta (AccD).

The protein resides in the cytoplasm. The catalysed reaction is N(6)-carboxybiotinyl-L-lysyl-[protein] + acetyl-CoA = N(6)-biotinyl-L-lysyl-[protein] + malonyl-CoA. Its pathway is lipid metabolism; malonyl-CoA biosynthesis; malonyl-CoA from acetyl-CoA: step 1/1. Its function is as follows. Component of the acetyl coenzyme A carboxylase (ACC) complex. First, biotin carboxylase catalyzes the carboxylation of biotin on its carrier protein (BCCP) and then the CO(2) group is transferred by the carboxyltransferase to acetyl-CoA to form malonyl-CoA. In Pseudomonas putida (strain ATCC 47054 / DSM 6125 / CFBP 8728 / NCIMB 11950 / KT2440), this protein is Acetyl-coenzyme A carboxylase carboxyl transferase subunit alpha.